Reading from the N-terminus, the 326-residue chain is Heat-inducible transcription repressor HrcA (326 aa).

This sequence belongs to the HrcA family.

Functionally, negative regulator of class I heat shock genes (grpE-dnaK-dnaJ and groELS operons). Prevents heat-shock induction of these operons. The polypeptide is Heat-inducible transcription repressor HrcA (Staphylococcus saprophyticus subsp. saprophyticus (strain ATCC 15305 / DSM 20229 / NCIMB 8711 / NCTC 7292 / S-41)).